Here is a 149-residue protein sequence, read N- to C-terminus: 3-dehydroquinate dehydratase (149 aa).

Residue Y26 is the Proton acceptor of the active site. Substrate contacts are provided by N77, H83, and D90. H103 acts as the Proton donor in catalysis. Residues 104–105 and R114 contribute to the substrate site; that span reads LS.

Belongs to the type-II 3-dehydroquinase family. In terms of assembly, homododecamer.

The catalysed reaction is 3-dehydroquinate = 3-dehydroshikimate + H2O. It participates in metabolic intermediate biosynthesis; chorismate biosynthesis; chorismate from D-erythrose 4-phosphate and phosphoenolpyruvate: step 3/7. Functionally, catalyzes a trans-dehydration via an enolate intermediate. The sequence is that of 3-dehydroquinate dehydratase from Haemophilus influenzae (strain PittEE).